The following is a 313-amino-acid chain: Ankyrin repeat family A protein 2 (313 aa).

5 ANK repeats span residues 148–180 (ANSLSVHQLAAQGEMLYLATRIEQENVINHTDE), 181–213 (EGFTPLMWAAAHGQIAVVEFLLQNGADPQLLGK), 214–246 (GRESALSLACSKGYTDIVKMLLDCGVDVNEYDW), 247–279 (NGGTPLLYAVHGNHVKCVKMLLENGADPTIETD), and 280–313 (SGYNSMDLAVALGYRSVQQVIESHLLKLLQNIKE).

As to quaternary structure, interacts (via ANK repeats) with CCDC8 (via PxLPxI/L motif); mediates the interaction with the 3M complex which is composed of CCDC8, CUL7 and OBSL1. Interacts (via ANK repeats) with HDAC4 (via PxLPxI/L motif). Interacts (via ANK repeats) with HDAC5 (via PxLPxI/L motif). Interacts (via ANK repeats) with LRP2/megalin (via PxLPxI/L motif). Interacts (via ANK repeats) with RFX7 (via PxLPxI/L motif). Interacts with AHRR. Interacts with NEK6.

It is found in the cytoplasm. The protein localises to the cytoskeleton. It localises to the membrane. Its function is as follows. May regulate the interaction between the 3M complex and the histone deacetylases HDAC4 and HDAC5. May also regulate LRP2/megalin. The polypeptide is Ankyrin repeat family A protein 2 (ANKRA2) (Bos taurus (Bovine)).